We begin with the raw amino-acid sequence, 896 residues long: Translation initiation factor IF-2 (896 aa).

Composition is skewed to basic and acidic residues over residues 94-159 and 166-219; these read KRDP…KDKV and DMTK…EKNW. A disordered region spans residues 94-307; it reads KRDPQEAERL…GSALQQGFQK (214 aa). Positions 256–271 are enriched in basic residues; the sequence is GRGRNAKAARPAKKGN. A compositionally biased stretch (basic and acidic residues) spans 272–285; it reads KHAESKADREEARA. The region spanning 395-564 is the tr-type G domain; the sequence is PRAPVVTIMG…LLQAEVLELK (170 aa). A G1 region spans residues 404–411; the sequence is GHVDHGKT. Position 404–411 (404–411) interacts with GTP; it reads GHVDHGKT. Residues 429 to 433 form a G2 region; that stretch reads GITQH. Positions 450–453 are G3; it reads DTPG. GTP-binding positions include 450 to 454 and 504 to 507; these read DTPGH and NKID. Residues 504-507 are G4; sequence NKID. A G5 region spans residues 540 to 542; it reads SAK.

This sequence belongs to the TRAFAC class translation factor GTPase superfamily. Classic translation factor GTPase family. IF-2 subfamily.

The protein localises to the cytoplasm. One of the essential components for the initiation of protein synthesis. Protects formylmethionyl-tRNA from spontaneous hydrolysis and promotes its binding to the 30S ribosomal subunits. Also involved in the hydrolysis of GTP during the formation of the 70S ribosomal complex. This chain is Translation initiation factor IF-2 (infB), found in Klebsiella oxytoca.